The chain runs to 129 residues: Lysozyme C, milk isozyme (129 aa).

The region spanning 1-129 (KVFSKCELAH…LSEYLASCNL (129 aa)) is the C-type lysozyme domain. Disulfide bonds link Cys6–Cys127, Cys30–Cys115, Cys65–Cys80, and Cys76–Cys94. Residues Glu35 and Asp53 contribute to the active site. Lys82, Asp85, Asn87, Asp90, and Asp91 together coordinate Ca(2+).

This sequence belongs to the glycosyl hydrolase 22 family. As to quaternary structure, monomer. It depends on Ca(2+) as a cofactor.

It catalyses the reaction Hydrolysis of (1-&gt;4)-beta-linkages between N-acetylmuramic acid and N-acetyl-D-glucosamine residues in a peptidoglycan and between N-acetyl-D-glucosamine residues in chitodextrins.. Functionally, lysozymes have primarily a bacteriolytic function; those in tissues and body fluids are associated with the monocyte-macrophage system and enhance the activity of immunoagents. This is Lysozyme C, milk isozyme (LYZ) from Equus caballus (Horse).